The following is an 882-amino-acid chain: Putative HTH-type transcriptional regulator Mb0914c (882 aa).

Residues 814 to 879 (PARGWGSLTP…QLVDEAARRG (66 aa)) enclose the HTH luxR-type domain. Residues 838–857 (NKDIAKRLFVSPRTVQTHLT) constitute a DNA-binding region (H-T-H motif).

This Mycobacterium bovis (strain ATCC BAA-935 / AF2122/97) protein is Putative HTH-type transcriptional regulator Mb0914c.